A 1187-amino-acid chain; its full sequence is RNA helicase Mov10l1 (1187 aa).

The disordered stretch occupies residues 273–347; the sequence is RSKSCPGAAA…EPEPGGLIPP (75 aa). Composition is skewed to basic and acidic residues over residues 296–307 and 322–339; these read HHREDKTDEIPE and ACKE…KQEP. Repeat copies occupy residues 642–652, 653–663, 664–674, 675–685, and 686–696. Positions 642–696 are 5 X 11 AA tandem repeats of [TI]-R-N-[DN]-[GS]-Q-[SP]-I-T-[NK]-[IVN]; sequence TRNDSQSITNIIRNDGQSITNVTRNDGQPITKVTRNNSQSITNITRNDGQPITKN. The interval 686 to 727 is disordered; the sequence is TRNDGQPITKNKKTVKDQTKHTTEERHVGTTDQPEKASSTAE. Positions 699 to 720 are enriched in basic and acidic residues; sequence TVKDQTKHTTEERHVGTTDQPE. Residue 772–779 participates in ATP binding; the sequence is GPPGTGKT. Positions 888–891 match the DEAG box motif; it reads DEAG.

Belongs to the DNA2/NAM7 helicase family. SDE3 subfamily. Interacts with PIWIL1. Interacts with PIWIL2. Interacts with PIWIL4. Interacts with HSPA2. Interacts with PLD6. As to expression, isoform 1: Specifically expressed in testis. Isoform 1: In testis, present in pachytene spermatocytes but absent in postmeiotic spermatids (at protein level). Isoform 2: Present in cardiomyocytes (at protein level). Isoform 2: Heart specific. Isoform 3: Heart specific and is specifically expressed in cardiac myocytes.

It is found in the cytoplasm. It catalyses the reaction ATP + H2O = ADP + phosphate + H(+). Its function is as follows. ATP-dependent RNA helicase required during spermatogenesis to repress transposable elements and prevent their mobilization, which is essential for germline integrity. Acts via the piRNA metabolic process, which mediates the repression of transposable elements during meiosis by forming complexes composed of piRNAs and Piwi proteins and governs the methylation and subsequent repression of transposons. Involved in the primary piRNA metabolic process. Specifically binds to piRNA precursors and promotes the generation of intermediate piRNA processing fragments that are subsequently loaded to Piwi proteins. Acts via its ATP-dependent RNA helicase activity: displays 5'-3' RNA unwinding activity and probably mediates unwinding and funneling of single-stranded piRNA precursor transcripts to the endonuclease that catalyzes the first cleavage step of piRNA processing to generate piRNA intermediate fragments that are subsequently loaded to Piwi proteins. In terms of biological role, may act downstream of MEF2C during heart formation. Acts as a cardiac-specific suppressor of cardiomyocyte hypertrophy and cell cycle progression, suggesting that it may suppress these processes through the regulation of CDKN1A. Such results however require additional evidence. The chain is RNA helicase Mov10l1 from Mus musculus (Mouse).